A 495-amino-acid polypeptide reads, in one-letter code: Siroheme synthase 2 (495 aa).

A precorrin-2 dehydrogenase /sirohydrochlorin ferrochelatase region spans residues 1-205; sequence MDHYPIFLNL…GREREAEQAM (205 aa). Residues 22–23 and 43–44 each bind NAD(+); these read ET and PD. Serine 130 bears the Phosphoserine mark. Positions 220 to 495 are uroporphyrinogen-III C-methyltransferase; the sequence is GEVYLVGAGP…HPAPADTEQA (276 aa). Proline 229 lines the S-adenosyl-L-methionine pocket. Aspartate 252 functions as the Proton acceptor in the catalytic mechanism. The active-site Proton donor is lysine 274. S-adenosyl-L-methionine-binding positions include 305-307, isoleucine 310, 335-336, methionine 387, and alanine 416; these read GGD and TA. The segment at 471-495 is disordered; sequence FPEHGCLRGEPRPTRHPAPADTEQA.

It in the N-terminal section; belongs to the precorrin-2 dehydrogenase / sirohydrochlorin ferrochelatase family. In the C-terminal section; belongs to the precorrin methyltransferase family.

It carries out the reaction uroporphyrinogen III + 2 S-adenosyl-L-methionine = precorrin-2 + 2 S-adenosyl-L-homocysteine + H(+). The enzyme catalyses precorrin-2 + NAD(+) = sirohydrochlorin + NADH + 2 H(+). The catalysed reaction is siroheme + 2 H(+) = sirohydrochlorin + Fe(2+). The protein operates within cofactor biosynthesis; adenosylcobalamin biosynthesis; precorrin-2 from uroporphyrinogen III: step 1/1. It functions in the pathway cofactor biosynthesis; adenosylcobalamin biosynthesis; sirohydrochlorin from precorrin-2: step 1/1. Its pathway is porphyrin-containing compound metabolism; siroheme biosynthesis; precorrin-2 from uroporphyrinogen III: step 1/1. It participates in porphyrin-containing compound metabolism; siroheme biosynthesis; siroheme from sirohydrochlorin: step 1/1. The protein operates within porphyrin-containing compound metabolism; siroheme biosynthesis; sirohydrochlorin from precorrin-2: step 1/1. In terms of biological role, multifunctional enzyme that catalyzes the SAM-dependent methylations of uroporphyrinogen III at position C-2 and C-7 to form precorrin-2 via precorrin-1. Then it catalyzes the NAD-dependent ring dehydrogenation of precorrin-2 to yield sirohydrochlorin. Finally, it catalyzes the ferrochelation of sirohydrochlorin to yield siroheme. This chain is Siroheme synthase 2, found in Halorhodospira halophila (strain DSM 244 / SL1) (Ectothiorhodospira halophila (strain DSM 244 / SL1)).